Reading from the N-terminus, the 268-residue chain is Putative hydro-lyase ABSDF2257 (268 aa).

It belongs to the D-glutamate cyclase family.

In Acinetobacter baumannii (strain SDF), this protein is Putative hydro-lyase ABSDF2257.